The following is a 240-amino-acid chain: Agamous-like MADS-box protein AGL16 (240 aa).

The 61-residue stretch at 1–61 folds into the MADS-box domain; sequence MGRGKIAIKR…GRLYDFSSSS (61 aa). The K-box domain maps to 86–176; it reads IQFWQKEAAI…HKKVNLMHQQ (91 aa).

In terms of assembly, homodimer. Interacts with AGL15, AGL24, AP1, AGL6, AG, AGL1, AGL11, AGL5, SEP3, SEP1, AGL63, AGL14, SOC1 and AGL21. Interacts with AGL63. Interacts with SVP. Expressed at high levels in leaves, moderate levels in roots, seedlings and stems, and at low levels in flowers, pollen and siliques. Accumulates in leaf guard cells and trichomes. Also present in epidermal cells of roots. Expressed in mature guard cells.

It is found in the nucleus. In terms of biological role, probable transcription factor involved in the regulation of flowering time in long-day photoperiod. Participates in the repression of FT expression and floral transition, by interacting closely with the FLC-SVP pathways. Functions in the satellite meristemoid lineage of stomatal development. The protein is Agamous-like MADS-box protein AGL16 (AGL16) of Arabidopsis thaliana (Mouse-ear cress).